Reading from the N-terminus, the 410-residue chain is Centromere protein U (410 aa).

Residues Met-1 to Ser-72 are disordered. A Nuclear localization signal motif is present at residues Arg-4–Thr-21. Over residues Arg-28 to Arg-38 the composition is skewed to basic residues. Thr-73 is modified (phosphothreonine; by PLK1). A disordered region spans residues Ser-87–His-228. Positions Asn-101–Ile-115 are enriched in polar residues. A phosphoserine mark is found at Ser-105, Ser-110, Ser-114, Ser-130, Ser-133, and Ser-135. A compositionally biased stretch (basic and acidic residues) spans Asp-138–Pro-149. Over residues Pro-158–Glu-169 the composition is skewed to low complexity. A Glycyl lysine isopeptide (Lys-Gly) (interchain with G-Cter in SUMO2) cross-link involves residue Lys-179. At Ser-186 the chain carries Phosphoserine. Position 191 is a phosphothreonine (Thr-191). The segment covering Thr-200–Ser-218 has biased composition (basic residues). Ser-224 carries the phosphoserine modification. Residues Gln-289 to Asn-352 adopt a coiled-coil conformation. Positions Lys-295–Leu-312 match the Nuclear localization signal motif.

This sequence belongs to the CENP-U/AME1 family. In terms of assembly, component of the CENPA-NAC complex, at least composed of CENPA, CENPC, CENPH, CENPM, CENPN, CENPT and CENPU. The CENPA-NAC complex interacts with the CENPA-CAD complex, composed of CENPI, CENPK, CENPL, CENPO, CENPP, CENPQ, CENPR and CENPS. Interacts with MLF1. In terms of processing, phosphorylated by PLK1 at Thr-73, creating a self-tethering site that specifically interacts with the polo-box domain of PLK1. Expressed at high levels in glioblastoma cell lines. Up-regulated in GBM (glioblastoma multiforme) tumors. Significantly increased in both the tumor core as well as the contralateral striatum and cortex in gliomas.

It is found in the cytoplasm. The protein resides in the nucleus. It localises to the chromosome. Its subcellular location is the centromere. The protein localises to the kinetochore. Its function is as follows. Component of the CENPA-NAC (nucleosome-associated) complex, a complex that plays a central role in assembly of kinetochore proteins, mitotic progression and chromosome segregation. The CENPA-NAC complex recruits the CENPA-CAD (nucleosome distal) complex and may be involved in incorporation of newly synthesized CENPA into centromeres. Plays an important role in the correct PLK1 localization to the mitotic kinetochores. A scaffold protein responsible for the initial recruitment and maintenance of the kinetochore PLK1 population until its degradation. Involved in transcriptional repression. The chain is Centromere protein U (Cenpu) from Rattus norvegicus (Rat).